Consider the following 250-residue polypeptide: Ribosomal RNA small subunit methyltransferase J (250 aa).

Residues Arg-101–Asp-102, Glu-117–Arg-118, Ser-153–Ser-154, and Asp-171 each bind S-adenosyl-L-methionine.

This sequence belongs to the methyltransferase superfamily. RsmJ family.

Its subcellular location is the cytoplasm. The catalysed reaction is guanosine(1516) in 16S rRNA + S-adenosyl-L-methionine = N(2)-methylguanosine(1516) in 16S rRNA + S-adenosyl-L-homocysteine + H(+). Its function is as follows. Specifically methylates the guanosine in position 1516 of 16S rRNA. The polypeptide is Ribosomal RNA small subunit methyltransferase J (Erwinia tasmaniensis (strain DSM 17950 / CFBP 7177 / CIP 109463 / NCPPB 4357 / Et1/99)).